The primary structure comprises 76 residues: DNA polymerase III subunit theta (76 aa).

The DNA polymerase holoenzyme is a complex that contains 10 different types of subunits. These subunits are organized into 3 functionally essential subassemblies: the pol III core, the beta sliding clamp processivity factor and the clamp-loading complex. The pol III core (subunits alpha,epsilon and theta) contains the polymerase and the 3'-5' exonuclease proofreading activities. The polymerase is tethered to the template via the sliding clamp processivity factor. The clamp-loading complex assembles the beta processivity factor onto the primer template and plays a central role in the organization and communication at the replication fork. This complex contains delta, delta', psi and chi, and copies of either or both of two different DnaX proteins, gamma and tau. The composition of the holoenzyme is, therefore: (alpha,epsilon,theta)[2]-(gamma/tau)[3]-delta,delta', psi,chi-beta[4].

The enzyme catalyses DNA(n) + a 2'-deoxyribonucleoside 5'-triphosphate = DNA(n+1) + diphosphate. DNA polymerase III is a complex, multichain enzyme responsible for most of the replicative synthesis in bacteria. This DNA polymerase also exhibits 3' to 5' exonuclease activity. In terms of biological role, the exact function of the theta subunit is unknown. In Escherichia coli O157:H7, this protein is DNA polymerase III subunit theta (holE).